Here is a 37-residue protein sequence, read N- to C-terminus: M-oxotoxin-Ot2b (37 aa).

In terms of tissue distribution, expressed by the venom gland.

It localises to the secreted. Disrupts biological membranes, particularly those rich in phosphocholine. Has antimicrobial activity against Gram-negative bacterium E.coli, Gram-positive bacteria B.subtilis and S.aureus, and hemolytic activity against sheep, pig and guinea pig red blood cells. Has insecticidal activity against S.frugiperda ovarian cells by opening non-selective ion channels. Enhances the insecticidal activity of spider venom neurotoxic peptides. The polypeptide is M-oxotoxin-Ot2b (Oxyopes takobius (Lynx spider)).